Reading from the N-terminus, the 88-residue chain is Elongation factor 1-beta (88 aa).

Belongs to the EF-1-beta/EF-1-delta family.

Promotes the exchange of GDP for GTP in EF-1-alpha/GDP, thus allowing the regeneration of EF-1-alpha/GTP that could then be used to form the ternary complex EF-1-alpha/GTP/AAtRNA. The sequence is that of Elongation factor 1-beta from Halobacterium salinarum (strain ATCC 29341 / DSM 671 / R1).